The following is a 300-amino-acid chain: Ribosomal protein bS6--L-glutamate ligase (300 aa).

The ATP-grasp domain maps to 104–287 (LQLLARQGID…IAGRMIQWIE (184 aa)). ATP contacts are provided by residues lysine 141, 178–179 (EY), aspartate 187, and 211–213 (RSN). Positions 248, 260, and 262 each coordinate Mg(2+). Mn(2+)-binding residues include aspartate 248, glutamate 260, and asparagine 262.

It belongs to the RimK family. Mg(2+) is required as a cofactor. Mn(2+) serves as cofactor.

An L-glutamate ligase that catalyzes the ATP-dependent post-translational addition of glutamate residues to the C-terminus of ribosomal protein bS6 (RpsF). Is also able to catalyze the synthesis of poly-alpha-glutamate in vitro, via ATP hydrolysis from unprotected glutamate as substrate. The number of glutamate residues added to either RpsF or to poly-alpha-glutamate changes with pH. The sequence is that of Ribosomal protein bS6--L-glutamate ligase from Salmonella agona (strain SL483).